Consider the following 272-residue polypeptide: uncharacterized protein (272 aa).

Residues 101–130 (CPTGKKNKAPSSLIPKISKTSTSSLTKEDE) are disordered. The span at 110–125 (PSSLIPKISKTSTSSL) shows a compositional bias: low complexity. Serine 142 bears the Phosphoserine mark.

This is an uncharacterized protein from Arabidopsis thaliana (Mouse-ear cress).